The sequence spans 48 residues: Cuticle protein 6 isoform b (48 aa).

The polypeptide is Cuticle protein 6 isoform b (Limulus polyphemus (Atlantic horseshoe crab)).